Here is a 61-residue protein sequence, read N- to C-terminus: UPF0434 protein Pmen_1615 (61 aa).

This sequence belongs to the UPF0434 family.

The sequence is that of UPF0434 protein Pmen_1615 from Ectopseudomonas mendocina (strain ymp) (Pseudomonas mendocina).